Reading from the N-terminus, the 487-residue chain is Proline--tRNA ligase (487 aa).

The protein belongs to the class-II aminoacyl-tRNA synthetase family. ProS type 3 subfamily. Homodimer.

The protein resides in the cytoplasm. It catalyses the reaction tRNA(Pro) + L-proline + ATP = L-prolyl-tRNA(Pro) + AMP + diphosphate. Catalyzes the attachment of proline to tRNA(Pro) in a two-step reaction: proline is first activated by ATP to form Pro-AMP and then transferred to the acceptor end of tRNA(Pro). This chain is Proline--tRNA ligase, found in Pyrobaculum calidifontis (strain DSM 21063 / JCM 11548 / VA1).